The sequence spans 351 residues: Ion-translocating oxidoreductase complex subunit D (351 aa).

4 consecutive transmembrane segments (helical) span residues 18–38 (IMLLVILACIPGIIAQTYFFG), 42–62 (LIQVALAIMTAVLAEGAVLHL), 87–107 (LPPLAPWWMIVLGTAFAIIIA), and 121–141 (PAMVGYVVLLISFPVQMTSWL). An FMN phosphoryl threonine modification is found at Thr185. 5 helical membrane-spanning segments follow: residues 212-232 (LAGIGWQWINLGFLAGGLLLL), 241-261 (IPVSFLLALAGCAAISWMIAP), 264-284 (FAPPMLHLFSGATMLGAFFIA), 298-318 (LIFGALIGILVWLIRVYGGYP), and 320-340 (GVAFAVLLANICVPLIDHYTQ).

Belongs to the NqrB/RnfD family. In terms of assembly, the complex is composed of six subunits: RnfA, RnfB, RnfC, RnfD, RnfE and RnfG. It depends on FMN as a cofactor.

It is found in the cell inner membrane. Part of a membrane-bound complex that couples electron transfer with translocation of ions across the membrane. The chain is Ion-translocating oxidoreductase complex subunit D from Yersinia enterocolitica serotype O:8 / biotype 1B (strain NCTC 13174 / 8081).